We begin with the raw amino-acid sequence, 126 residues long: Large ribosomal subunit protein bL20 (126 aa).

It belongs to the bacterial ribosomal protein bL20 family.

In terms of biological role, binds directly to 23S ribosomal RNA and is necessary for the in vitro assembly process of the 50S ribosomal subunit. It is not involved in the protein synthesizing functions of that subunit. The chain is Large ribosomal subunit protein bL20 from Buchnera aphidicola subsp. Baizongia pistaciae (strain Bp).